Here is a 361-residue protein sequence, read N- to C-terminus: GDP-mannose 4,6 dehydratase 1 (361 aa).

NADP(+)-binding positions include 23–28 (GITGQD), 79–80 (DL), 101–105 (LAAQS), and Y116. The active site involves S150. Active-site nucleophile residues include E152 and Y173. K177, H203, and R208 together coordinate NADP(+).

This sequence belongs to the NAD(P)-dependent epimerase/dehydratase family. GDP-mannose 4,6-dehydratase subfamily. Homotetramer. The cofactor is NADP(+). In terms of tissue distribution, expressed in roots,stipules and pollen just before anthesis. Primarily localized to the root meristem and columella root cap. Not expressed in emerging lateral roots.

The catalysed reaction is GDP-alpha-D-mannose = GDP-4-dehydro-alpha-D-rhamnose + H2O. It participates in nucleotide-sugar biosynthesis; GDP-L-fucose biosynthesis via de novo pathway; GDP-L-fucose from GDP-alpha-D-mannose: step 1/2. Catalyzes the conversion of GDP-D-mannose to GDP-4-dehydro-6-deoxy-D-mannose. In Arabidopsis thaliana (Mouse-ear cress), this protein is GDP-mannose 4,6 dehydratase 1 (GMD1).